The primary structure comprises 142 residues: Large ribosomal subunit protein uL11 (142 aa).

This sequence belongs to the universal ribosomal protein uL11 family. In terms of assembly, part of the ribosomal stalk of the 50S ribosomal subunit. Interacts with L10 and the large rRNA to form the base of the stalk. L10 forms an elongated spine to which L12 dimers bind in a sequential fashion forming a multimeric L10(L12)X complex. Post-translationally, one or more lysine residues are methylated.

Functionally, forms part of the ribosomal stalk which helps the ribosome interact with GTP-bound translation factors. The polypeptide is Large ribosomal subunit protein uL11 (Shewanella sediminis (strain HAW-EB3)).